We begin with the raw amino-acid sequence, 391 residues long: Phosphoglycerate kinase (391 aa).

Substrate-binding positions include 21–23 (DLN), Arg36, 59–62 (HLGR), Arg114, and Arg147. Residues Lys198, Glu315, and 344 to 347 (GGDT) contribute to the ATP site.

Belongs to the phosphoglycerate kinase family. In terms of assembly, monomer.

It is found in the cytoplasm. The enzyme catalyses (2R)-3-phosphoglycerate + ATP = (2R)-3-phospho-glyceroyl phosphate + ADP. Its pathway is carbohydrate degradation; glycolysis; pyruvate from D-glyceraldehyde 3-phosphate: step 2/5. The polypeptide is Phosphoglycerate kinase (Actinobacillus pleuropneumoniae serotype 5b (strain L20)).